We begin with the raw amino-acid sequence, 636 residues long: Probable potassium transport system protein Kup (636 aa).

The next 12 membrane-spanning stretches (helical) occupy residues 22-42 (VGLL…SPLY), 64-84 (ILSL…VMFI), 115-135 (LMVI…MITP), 150-170 (FDGI…ALFL), 182-202 (LFGP…VHGI), 220-240 (FFVV…LALT), 261-281 (WFIL…ALLL), 293-313 (LLAP…ATVI), 351-371 (IYIG…VIGF), 383-403 (VAVT…MLLL), 408-428 (PLLA…FFAA), and 433-453 (IVQG…LMST).

The protein belongs to the HAK/KUP transporter (TC 2.A.72) family.

It localises to the cell inner membrane. It carries out the reaction K(+)(in) + H(+)(in) = K(+)(out) + H(+)(out). Its function is as follows. Transport of potassium into the cell. Likely operates as a K(+):H(+) symporter. The sequence is that of Probable potassium transport system protein Kup from Pseudomonas putida (strain ATCC 700007 / DSM 6899 / JCM 31910 / BCRC 17059 / LMG 24140 / F1).